Reading from the N-terminus, the 690-residue chain is Rho guanine nucleotide exchange factor 4 (690 aa).

The segment at 73–126 (KTQRKKLQKQAHVERRLHIGAVHKDGVKCWRKTIITSPESLNLPRRSHPLSQSA) is ABR (APC-binding region) domain. Residues 113–145 (LNLPRRSHPLSQSAPTGLNHMGWPEHTPGTAMP) are disordered. One can recognise an SH3 domain in the interval 194-253 (GSVVCAEALWDHVTMDDQELGFKAGDVIEVMDATNREWWWGRVADGEGWFPASFVRLRVN). The disordered stretch occupies residues 257–282 (PADDDAPLAGNSGAEDGGAEAQSSKD). Positions 284-468 (MRTNVINEIL…KNVAQLINER (185 aa)) constitute a DH domain. The region spanning 499 to 606 (ELIYSGELTR…WLKAFARERE (108 aa)) is the PH domain.

In terms of assembly, isoform 3 interacts with RHOA and RAC1, and (via ABR domain) with APC. Found in a complex consisting of ARHGEF4, APC and CTNNB1. Expressed at high levels in the brain, skeletal muscle and testis and at low levels in the kidney, lung, small intestine, ovary and prostate. Expression is aberrantly enhanced in most colorectal tumors.

It localises to the cytoplasm. The protein localises to the cell projection. The protein resides in the ruffle membrane. Acts as a guanine nucleotide exchange factor (GEF) for RHOA, RAC1 and CDC42 GTPases. Binding of APC may activate RAC1 GEF activity. The APC-ARHGEF4 complex seems to be involved in cell migration as well as in E-cadherin-mediated cell-cell adhesion. Required for MMP9 up-regulation via the JNK signaling pathway in colorectal tumor cells. Involved in tumor angiogenesis and may play a role in intestinal adenoma formation and tumor progression. The protein is Rho guanine nucleotide exchange factor 4 (ARHGEF4) of Homo sapiens (Human).